We begin with the raw amino-acid sequence, 558 residues long: Phosphatidylserine lipase ABHD16A (558 aa).

The next 2 helical transmembrane spans lie at 60–80 (ILAL…FAFF) and 93–113 (VVPF…VACL). Over 114–558 (RGIGRWTNPQ…AQHFQMPWHL (445 aa)) the chain is Cytoplasmic. The AB hydrolase-1 domain maps to 281-406 (LVICCEGNAG…ALVTRTVRQH (126 aa)). Residues S355, D430, and H507 each act as charge relay system in the active site.

This sequence belongs to the AB hydrolase superfamily. ABHD16 family.

It is found in the membrane. It carries out the reaction 1-heptadecanoyl-2-(5Z,8Z,11Z,14Z-eicosatetraenoyl)-sn-glycero-3-phosphoserine + H2O = 1-heptadecanoyl-sn-glycero-3-phosphoserine + (5Z,8Z,11Z,14Z)-eicosatetraenoate + H(+). The catalysed reaction is 1-hexadecanoyl-2-(9Z-octadecenoyl)-sn-glycero-3-phospho-L-serine + H2O = 1-hexadecanoyl-sn-glycero-3-phospho-L-serine + (9Z)-octadecenoate + H(+). The enzyme catalyses 1-octadecanoyl-2-(9Z,12Z-octadecadienoyl)-sn-glycero-3-phosphoserine + H2O = 1-octadecanoyl-sn-glycero-3-phosphoserine + (9Z,12Z)-octadecadienoate + H(+). It catalyses the reaction 1-heptadecanoyl-2-(5Z,8Z,11Z,14Z-eicosatetraenoyl)-sn-glycero-3-phosphocholine + H2O = 1-heptadecanoyl-sn-glycero-3-phosphocholine + (5Z,8Z,11Z,14Z)-eicosatetraenoate + H(+). It carries out the reaction 1-hexadecanoyl-2-(9Z-octadecenoyl)-sn-glycero-3-phosphoglycerol + H2O = 1-hexadecanoyl-sn-glycero-3-phosphoglycerol + (9Z)-octadecenoate + H(+). The catalysed reaction is 1-hexadecanoyl-2-(9Z-octadecenoyl)-sn-glycero-3-phospho-(1D-myo-inositol) + H2O = 1-hexadecanoyl-sn-glycero-3-phospho-(1D-myo-inositol) + (9Z)-octadecenoate + H(+). The enzyme catalyses 1-heptadecanoyl-2-(5Z,8Z,11Z,14Z-eicosatetraenoyl)-sn-glycero-3-phosphoethanolamine + H2O = 1-heptadecanoyl-sn-glycero-3-phosphoethanolamine + (5Z,8Z,11Z,14Z)-eicosatetraenoate + H(+). It catalyses the reaction 1-hexadecanoyl-2-(9Z-octadecenoyl)-sn-glycero-3-phospho-(1'-sn-glycerol) + H2O = 1-hexadecanoyl-sn-glycero-3-phospho-(1'-sn-glycerol) + (9Z)-octadecenoate + H(+). It carries out the reaction Hydrolyzes glycerol monoesters of long-chain fatty acids.. The catalysed reaction is 1-tetradecanoylglycerol + H2O = tetradecanoate + glycerol + H(+). The enzyme catalyses 2-hexadecanoylglycerol + H2O = glycerol + hexadecanoate + H(+). It catalyses the reaction 1-(9Z-octadecenoyl)-glycerol + H2O = glycerol + (9Z)-octadecenoate + H(+). It carries out the reaction 2-(9Z-octadecenoyl)-glycerol + H2O = glycerol + (9Z)-octadecenoate + H(+). The catalysed reaction is 2-(9Z,12Z-octadecadienoyl)-glycerol + H2O = (9Z,12Z)-octadecadienoate + glycerol + H(+). The enzyme catalyses 1-(5Z,8Z,11Z,14Z-eicosatetraenoyl)-glycerol + H2O = glycerol + (5Z,8Z,11Z,14Z)-eicosatetraenoate + H(+). It catalyses the reaction 2-(5Z,8Z,11Z,14Z-eicosatetraenoyl)-glycerol + H2O = glycerol + (5Z,8Z,11Z,14Z)-eicosatetraenoate + H(+). It carries out the reaction prostaglandin D2-1-glycerol ester + H2O = prostaglandin D2 + glycerol + H(+). The catalysed reaction is 2-glyceryl-15-deoxy-Delta(12,14)-prostaglandin J2 + H2O = 15-deoxy-Delta(12,14)-prostaglandin J2 + glycerol + H(+). The enzyme catalyses 1-(9Z,12Z-octadecadienoyl)-glycerol + H2O = (9Z,12Z)-octadecadienoate + glycerol + H(+). Specifically inhibited by alpha-alkylidene-beta-lactone KC01 ((Z)-6-(2-Oxo-4-tridecyloxetan-3-ylidene)hexanamide). Phosphatidylserine (PS) lipase that mediates the hydrolysis of phosphatidylserine to generate lysophosphatidylserine (LPS). LPS constitutes a class of signaling lipids that regulates immunological and neurological processes. Has no activity towards diacylglycerol, triacylglycerol or lysophosphatidylserine lipase. Also has monoacylglycerol lipase activity, with preference for 1-(9Z,12Z-octadecadienoyl)-glycerol (1-LG) and 2-glyceryl-15-deoxy-Delta(12,14)-prostaglandin J2 (15d-PGJ(2)-G). This chain is Phosphatidylserine lipase ABHD16A, found in Mus musculus (Mouse).